A 111-amino-acid chain; its full sequence is Large ribosomal subunit protein uL24 (111 aa).

This sequence belongs to the universal ribosomal protein uL24 family. Part of the 50S ribosomal subunit.

In terms of biological role, one of two assembly initiator proteins, it binds directly to the 5'-end of the 23S rRNA, where it nucleates assembly of the 50S subunit. Its function is as follows. One of the proteins that surrounds the polypeptide exit tunnel on the outside of the subunit. This chain is Large ribosomal subunit protein uL24, found in Bifidobacterium longum (strain DJO10A).